The sequence spans 335 residues: MGTHRIFIGLIALCCFCLPHLIEAKPFGVYQQQVFVDQSGHGNFTTIQKAIDSVPINNRHWFFINVKAGLYREKIKIPYEKPFIVLVGAGKRLTRVEWDDHYSVAQSPTFSTLADNTVVKSITFANSYNFPSKGKMNKNPRTPAVAALIGGDKSAFYSVGFAGIQDTLWDFDGRHYFHRCTIQGAVDFIFGTGQSIYQSCVIQVLGGQLEPGLAGYITAQGRTNPYDANGFIFINCLVYGTGMAFLGRPWRGYSRVIFYNSNLTDVVVPEGWDAWNFVGHENQLVFAEHGCFGSGANIGRRVKWVKKLSESAIQNLADLSFINRGGWVEDLPIPA.

The signal sequence occupies residues 1–24 (MGTHRIFIGLIALCCFCLPHLIEA). Asparagine 43 is a glycosylation site (N-linked (GlcNAc...) asparagine). Aspartate 166 acts as the Proton donor in catalysis. Catalysis depends on aspartate 187, which acts as the Nucleophile. Residues arginine 248 and tryptophan 250 each coordinate substrate. N-linked (GlcNAc...) asparagine glycosylation is present at asparagine 262.

Belongs to the pectinesterase family. Expressed in flower buds.

The protein resides in the secreted. It is found in the cell wall. The enzyme catalyses [(1-&gt;4)-alpha-D-galacturonosyl methyl ester](n) + n H2O = [(1-&gt;4)-alpha-D-galacturonosyl](n) + n methanol + n H(+). Its pathway is glycan metabolism; pectin degradation; 2-dehydro-3-deoxy-D-gluconate from pectin: step 1/5. Acts in the modification of cell walls via demethylesterification of cell wall pectin. This chain is Probable pectinesterase 29 (PME29), found in Arabidopsis thaliana (Mouse-ear cress).